Here is a 267-residue protein sequence, read N- to C-terminus: Probable tetrahydroxynaphthalene reductase MYCGRDRAFT_87994 (267 aa).

4 residues coordinate NADP(+): isoleucine 26, aspartate 72, asparagine 99, and arginine 132. Serine 149 serves as the catalytic Proton donor. 4 residues coordinate NADP(+): tyrosine 163, lysine 167, isoleucine 196, and threonine 198. Tyrosine 163 (proton acceptor) is an active-site residue. Lysine 167 (lowers pKa of active site Tyr) is an active-site residue.

The protein belongs to the short-chain dehydrogenases/reductases (SDR) family. Homotetramer.

The catalysed reaction is scytalone + NADP(+) = naphthalene-1,3,6,8-tetrol + NADPH + H(+). Its pathway is pigment biosynthesis; melanin biosynthesis. In terms of biological role, probable tetrahydroxynaphthalene reductase; part of the gene cluster 29 that mediates the biosynthesis dihydroxynaphthalene (DHN)-melanin, a bluish-green pigment and a structural component of the conidial wall. Catalyzes the NADPH-dependent reduction of 1,3,6,8-tetrahydroxynaphthalene (T4HN) into (+)-scytalone. The chain is Probable tetrahydroxynaphthalene reductase MYCGRDRAFT_87994 from Zymoseptoria tritici (strain CBS 115943 / IPO323) (Speckled leaf blotch fungus).